The sequence spans 352 residues: Thymidine kinase (352 aa).

32 to 39 (GVYGIGKS) is a binding site for ATP. Glutamate 60 (proton acceptor) is an active-site residue. Substrate-binding residues include tyrosine 78 and glutamine 102. Residue arginine 192 participates in ATP binding. Position 198 (arginine 198) interacts with substrate.

This sequence belongs to the herpesviridae thymidine kinase family. Homodimer.

It carries out the reaction thymidine + ATP = dTMP + ADP + H(+). Functionally, catalyzes the transfer of the gamma-phospho group of ATP to thymidine to generate dTMP in the salvage pathway of pyrimidine synthesis. The dTMP serves as a substrate for DNA polymerase during viral DNA replication. Allows the virus to be reactivated and to grow in non-proliferative cells lacking a high concentration of phosphorylated nucleic acid precursors. In Equus caballus (Horse), this protein is Thymidine kinase.